We begin with the raw amino-acid sequence, 790 residues long: SH3 domain-containing protein 19 (790 aa).

2 disordered regions span residues 21 to 196 and 241 to 374; these read EGQT…PVLQ and EPIK…MDLQ. Position 65 is a phosphoserine (serine 65). A compositionally biased stretch (polar residues) spans 287-296; that stretch reads NTFSTVSGKL. Pro residues predominate over residues 336-351; the sequence is QQPPTKVPPERPPPPK. The tract at residues 342–358 is interaction with SH3GL1; the sequence is VPPERPPPPKLSATRRS. The segment covering 365–374 has biased composition (polar residues); sequence NRSSSDMDLQ. A Phosphoserine modification is found at serine 369. SH3 domains lie at 415–477, 495–554, 571–630, 661–720, and 730–789; these read LSVP…PLDE, SGAP…VIID, VKGS…PVED, LPAE…PCPA, and PKGR…FLQI. Position 762 is a phosphoserine (serine 762).

In terms of assembly, interacts with ADAM12. Isoform 4 and isoform 5 (but not isoform 1 and isoform 2) interact with ADAM9, ADAM10, ADAM15 and ADAM17. Interacts with SH3GL1 SH3 domain. Interacts via SH3 3 and SH3 4 or SH3 4 and SH3 5 domains with SOS2. Probably forms a trimeric complex with SH3GL1 and SOS2. Interacts with SH3YL1. In terms of tissue distribution, widely expressed with highest levels in heart, skeletal muscle, kidney, liver, placenta, small intestine and lung. Expressed at low levels in colon, thymus, spleen and leukocytes.

The protein localises to the cytoplasm. It is found in the nucleus. Its function is as follows. May play a role in regulating A disintegrin and metalloproteases (ADAMs) in the signaling of EGFR-ligand shedding. May be involved in suppression of Ras-induced cellular transformation and Ras-mediated activation of ELK1. Plays a role in the regulation of cell morphology and cytoskeletal organization. This chain is SH3 domain-containing protein 19 (SH3D19), found in Homo sapiens (Human).